We begin with the raw amino-acid sequence, 591 residues long: Acyl-CoA-dependent acyltransferase MAC1 (591 aa).

A peroxisomal targeting signal type 1 region spans residues 589 to 591; it reads ARL.

The protein belongs to the trichothecene O-acetyltransferase family.

The protein resides in the peroxisome. It participates in secondary metabolite biosynthesis. In terms of biological role, acyl-CoA-dependent acyltransferase; part of the gene cluster that mediates the biosynthesis of mannosylerythritol lipids (MELs), surface-active substances that enhance the availability of water-insoluble substrates. Mannosylerythritol lipid production is responsible for hemolytic activity of Ustilago maydis. Depending on the number of acetyl groups, mannosylerythritol lipids can be differentiated into MEL A (fully acetylated), MEL B and MEL C (monoacetylated at R-6 and R-4, respectively), and the fully deacetylated MEL D. The first step in the pathway is the generation of mannosylerythritol by the glycosyltransferase EMT1 which catalyzes the transfer of GDP-mannose to the C-4 atom of meso-erythritol. This reaction has to be stereospecific, since only mannosyl-D-erythritol is generated. The produced disaccharide is subsequently acylated with fatty acids of various lengths derived from the peroxisomal beta-oxidation by the peroxisomal acyltransferases MAC1 and MAC2 at positions C-2 and C-3, repectively. The existence of MEL derivatives which carry an acetyl group at C-2 implies that at least MAC1 also accepts acetyl-CoA as a donor. The final step of MEL biosynthesis is the acetylation of the fully acylated mannosylerythritol lipids catalyzed by the acetyl-CoA-dependent acetyltransferase MAT1. MAT1 displays a relaxed regioselectivity and is able to transfer acetylgroups to both positions C-4 and C-6 of the mannosyl moiety. This Mycosarcoma maydis (Corn smut fungus) protein is Acyl-CoA-dependent acyltransferase MAC1.